Consider the following 371-residue polypeptide: Putative glutamate--cysteine ligase 2 (371 aa).

This sequence belongs to the glutamate--cysteine ligase type 2 family. YbdK subfamily.

The enzyme catalyses L-cysteine + L-glutamate + ATP = gamma-L-glutamyl-L-cysteine + ADP + phosphate + H(+). Its function is as follows. ATP-dependent carboxylate-amine ligase which exhibits weak glutamate--cysteine ligase activity. This is Putative glutamate--cysteine ligase 2 from Nitrosospira multiformis (strain ATCC 25196 / NCIMB 11849 / C 71).